Here is a 395-residue protein sequence, read N- to C-terminus: Multidrug resistance protein MdtL (395 aa).

The Cytoplasmic segment spans residues 1-3 (MKR). A helical transmembrane segment spans residues 4-24 (FLLCSFALVLLYPAGIDMYLV). The Periplasmic portion of the chain corresponds to 25-41 (GLPRIAADLNASEAQLH). A helical membrane pass occupies residues 42-62 (IAFSVYLAGMATAMLFAGKIA). Over 63-68 (DQSGRK) the chain is Cytoplasmic. The chain crosses the membrane as a helical span at residues 69–89 (PVAIVGALVFMMASLLCSRAS). Over 90–92 (EGS) the chain is Periplasmic. The chain crosses the membrane as a helical span at residues 93-113 (LFLSGRFLQGVGAGGCYVVAF). The Cytoplasmic portion of the chain corresponds to 114-130 (AILRDTLDEHRRAKVLS). Residues 131–151 (LLNGITCIVPVLAPVVGHLIM) form a helical membrane-spanning segment. The Periplasmic portion of the chain corresponds to 152–157 (LRFPWQ). Residues 158-178 (SLFYTMSAMGIIVGLLSLFIL) form a helical membrane-spanning segment. The Cytoplasmic portion of the chain corresponds to 179–216 (RETRPVRLAPRDLSRSSPAAESLINRFFVSRLAITTLS). A helical membrane pass occupies residues 217–237 (VSVILTFVNASPVLLMEVMGF). Residues 238–246 (SRGDYAITM) are Periplasmic-facing. Residues 247-267 (ALTAGVSMVVSFSTPFALGLF) form a helical membrane-spanning segment. At 268–270 (KPR) the chain is on the cytoplasmic side. Residues 271–291 (TLMLVSQGLFLTAGVTLSLAH) traverse the membrane as a helical segment. Residues 292–294 (TNT) are Periplasmic-facing. Residues 295-315 (VTLFGLTLICAGFSVGFGVAM) traverse the membrane as a helical segment. Residues 316-327 (SQALGPFSLRAG) are Cytoplasmic-facing. The helical transmembrane segment at 328–350 (VASSTLGIAQVCGSSLWIWLAAI) threads the bilayer. Residues 351 to 354 (LGIS) are Periplasmic-facing. A helical membrane pass occupies residues 355–377 (AMNMLIGILIGCSIVSILLIFSV). At 378–395 (TPNRSVAEHEEIPYQSRP) the chain is on the cytoplasmic side.

This sequence belongs to the major facilitator superfamily. DHA1 family. MdtL (TC 2.A.1.2.22) subfamily.

The protein resides in the cell inner membrane. The sequence is that of Multidrug resistance protein MdtL (mdtL) from Salmonella typhimurium (strain LT2 / SGSC1412 / ATCC 700720).